The primary structure comprises 292 residues: Phosphoribulokinase, plasmid (292 aa).

12–20 (GSSGAGTTS) lines the ATP pocket.

The protein belongs to the phosphoribulokinase family. As to quaternary structure, homooctamer.

It catalyses the reaction D-ribulose 5-phosphate + ATP = D-ribulose 1,5-bisphosphate + ADP + H(+). Its pathway is carbohydrate biosynthesis; Calvin cycle. In Cupriavidus necator (strain ATCC 17699 / DSM 428 / KCTC 22496 / NCIMB 10442 / H16 / Stanier 337) (Ralstonia eutropha), this protein is Phosphoribulokinase, plasmid (cfxP).